The following is a 398-amino-acid chain: MTQSVCILGVTGSIGRSTLKILGQHPDKYSVFAVSAHSRISELVEICKQFRPKVVVVPEQKIAELKTLFAQQNISDIDVLAGQEGLVDIASHTDVDIVMAAIVGAAGLLPTLAAVKAGKRVLLANKEALVMSGEIMMQAARDHQALLLPVDSEHNAIFQSLPHNYLQADRTGQPQLGVSKILLTASGGPFLNHSLEQLTHVTPQQACKHPNWSMGQKISVDSATLMNKGLELIEACHLFSISEHFVTVVVHPQSIIHSMVQYVDGSTLAQMGNPDMCTPIAHALAWPERLQTNVPALDLFEYSQLNFQAPDTQKFPALNLARQAMRAGGLAPTILNAANEIAVEAFLMERIGFTSIPQVVEHTLEKLENAAAESIECILDKDKVARSVAQQYISSIGG.

The NADPH site is built by threonine 11, glycine 12, serine 13, isoleucine 14, and asparagine 125. Lysine 126 is a 1-deoxy-D-xylulose 5-phosphate binding site. An NADPH-binding site is contributed by glutamate 127. Position 151 (aspartate 151) interacts with Mn(2+). Residues serine 152, glutamate 153, serine 186, and histidine 209 each contribute to the 1-deoxy-D-xylulose 5-phosphate site. Position 153 (glutamate 153) interacts with Mn(2+). Glycine 215 lines the NADPH pocket. 1-deoxy-D-xylulose 5-phosphate is bound by residues serine 222, asparagine 227, lysine 228, and glutamate 231. Glutamate 231 is a binding site for Mn(2+).

It belongs to the DXR family. Mg(2+) is required as a cofactor. Mn(2+) serves as cofactor.

The enzyme catalyses 2-C-methyl-D-erythritol 4-phosphate + NADP(+) = 1-deoxy-D-xylulose 5-phosphate + NADPH + H(+). Its pathway is isoprenoid biosynthesis; isopentenyl diphosphate biosynthesis via DXP pathway; isopentenyl diphosphate from 1-deoxy-D-xylulose 5-phosphate: step 1/6. Its function is as follows. Catalyzes the NADPH-dependent rearrangement and reduction of 1-deoxy-D-xylulose-5-phosphate (DXP) to 2-C-methyl-D-erythritol 4-phosphate (MEP). This Acinetobacter baumannii (strain ATCC 17978 / DSM 105126 / CIP 53.77 / LMG 1025 / NCDC KC755 / 5377) protein is 1-deoxy-D-xylulose 5-phosphate reductoisomerase.